The chain runs to 478 residues: MVRIQRGKLLAFCLCVMATVFLLITLQVVVELGKFEGKKFKNSHLKDGHAQMEAEPLHLHPFFNREGLTLNRKKTLAADSFPIMLWWSPLTGETGRLGQCGADACFFTINRTYLHHHRTKAFLFYGTDFSIDSLPLPRKAHHDWALFHEESPKNNYKLFHQPVITLFNYTATFSRHSHLPLTTQYLEGTEVLTSLRHLVPLRSKNHLRKSLAPLVYVQSDCDPPSDRDSYVRELMTYIEVDSYGECLRNKPLPPQLSNPASMDADGFFRILAQYKFILAFENAVCDDYITEKLWRPLKLGVVPVYYGSPSIADWLPSNRSAILVSEFSHPRELASYIRALDRDDRRYQAYIEWKLKGEISNQRLLTALRERKWGVQDVKQDNYIDAFECMVCTKVWDNIRLQEKGLPPKRWQADVTHLSCPEPTVFAFSPLVPRRRSLREMWIPSFQQSKKEARALRWLVDRNQNFSTQEFWALVFKD.

Residues 1 to 9 (MVRIQRGKL) are Cytoplasmic-facing. Residues 10–30 (LAFCLCVMATVFLLITLQVVV) traverse the membrane as a helical; Signal-anchor for type II membrane protein segment. The Lumenal segment spans residues 31–478 (ELGKFEGKKF…QEFWALVFKD (448 aa)). N-linked (GlcNAc...) asparagine glycosylation is found at N110 and N168. A disulfide bond links C389 and C392.

It belongs to the glycosyltransferase 10 family.

It localises to the endoplasmic reticulum membrane. It catalyses the reaction L-threonyl-[protein] + GDP-beta-L-fucose = 3-O-(alpha-L-fucosyl)-L-threonyl-[protein] + GDP + H(+). The enzyme catalyses L-seryl-[protein] + GDP-beta-L-fucose = 3-O-(alpha-L-fucosyl)-L-seryl-[protein] + GDP + H(+). It functions in the pathway protein modification; protein glycosylation. In terms of biological role, protein O-fucosyltransferase that specifically catalyzes O-fucosylation of serine or threonine residues in EMI domains of target proteins, such as MMRN1, MMRN2 and EMID1. Attaches fucose through an O-glycosidic linkage. O-fucosylation of EMI domain-containing proteins may be required for facilitating protein folding and secretion. May also show alpha-(1,3)-fucosyltransferase activity toward the innermost N-acetyl glucosamine (GlcNAc) residue in biantennary N-glycan acceptors. However, this was tested with a library of synthetic substrates and this activity is unsure in vivo. May be involved in biosynthesis of Lewis X-carrying biantennary N-glycans that regulate neuron stem cell self-renewal during brain development. This chain is GDP-fucose protein O-fucosyltransferase 3 (FUT10), found in Bos taurus (Bovine).